Reading from the N-terminus, the 123-residue chain is Ribosome-binding factor A (123 aa).

The protein belongs to the RbfA family. Monomer. Binds 30S ribosomal subunits, but not 50S ribosomal subunits or 70S ribosomes.

It localises to the cytoplasm. Functionally, one of several proteins that assist in the late maturation steps of the functional core of the 30S ribosomal subunit. Associates with free 30S ribosomal subunits (but not with 30S subunits that are part of 70S ribosomes or polysomes). Required for efficient processing of 16S rRNA. May interact with the 5'-terminal helix region of 16S rRNA. The polypeptide is Ribosome-binding factor A (Variovorax paradoxus (strain S110)).